The following is a 541-amino-acid chain: Chaperonin GroEL (541 aa).

ATP contacts are provided by residues 29–32 (TLGP), 86–90 (DGTTT), G413, and D494.

This sequence belongs to the chaperonin (HSP60) family. Forms a cylinder of 14 subunits composed of two heptameric rings stacked back-to-back. Interacts with the co-chaperonin GroES.

The protein localises to the cytoplasm. The catalysed reaction is ATP + H2O + a folded polypeptide = ADP + phosphate + an unfolded polypeptide.. Together with its co-chaperonin GroES, plays an essential role in assisting protein folding. The GroEL-GroES system forms a nano-cage that allows encapsulation of the non-native substrate proteins and provides a physical environment optimized to promote and accelerate protein folding. The sequence is that of Chaperonin GroEL from Acetivibrio thermocellus (strain ATCC 27405 / DSM 1237 / JCM 9322 / NBRC 103400 / NCIMB 10682 / NRRL B-4536 / VPI 7372) (Clostridium thermocellum).